Here is a 319-residue protein sequence, read N- to C-terminus: Cobalamin biosynthesis protein CbiB (319 aa).

Helical transmembrane passes span 56–76 (VMWV…LALA), 82–102 (WFGW…RSLA), 153–173 (VDGI…LAMA), 204–224 (VANY…AGLC), and 296–316 (LMWV…CGLS).

The protein belongs to the CobD/CbiB family.

Its subcellular location is the cell membrane. It participates in cofactor biosynthesis; adenosylcobalamin biosynthesis. Functionally, converts cobyric acid to cobinamide by the addition of aminopropanol on the F carboxylic group. However, the true cosubstrate could be (R)-1-amino-2-propanol O-2-phosphate, leading to cobinamide phosphate. The sequence is that of Cobalamin biosynthesis protein CbiB from Salmonella paratyphi B (strain ATCC BAA-1250 / SPB7).